Here is a 143-residue protein sequence, read N- to C-terminus: Deoxyuridine 5'-triphosphate nucleotidohydrolase (143 aa).

Residues 63-65 (RSG), N76, 80-82 (TID), and K90 each bind substrate.

Belongs to the dUTPase family. Mg(2+) serves as cofactor.

It catalyses the reaction dUTP + H2O = dUMP + diphosphate + H(+). It participates in pyrimidine metabolism; dUMP biosynthesis; dUMP from dCTP (dUTP route): step 2/2. In terms of biological role, this enzyme is involved in nucleotide metabolism: it produces dUMP, the immediate precursor of thymidine nucleotides and it decreases the intracellular concentration of dUTP so that uracil cannot be incorporated into DNA. In Finegoldia magna (strain ATCC 29328 / DSM 20472 / WAL 2508) (Peptostreptococcus magnus), this protein is Deoxyuridine 5'-triphosphate nucleotidohydrolase.